A 195-amino-acid chain; its full sequence is Endoribonuclease YbeY (195 aa).

Zn(2+) is bound by residues histidine 153, histidine 157, and histidine 163.

The protein belongs to the endoribonuclease YbeY family. Requires Zn(2+) as cofactor.

It is found in the cytoplasm. Functionally, single strand-specific metallo-endoribonuclease involved in late-stage 70S ribosome quality control and in maturation of the 3' terminus of the 16S rRNA. The sequence is that of Endoribonuclease YbeY from Prochlorococcus marinus (strain SARG / CCMP1375 / SS120).